Here is a 506-residue protein sequence, read N- to C-terminus: Ecdysteroid UDP-glucosyltransferase (506 aa).

Positions 1 to 18 (MTAYLIVFCLCCWSAARS) are cleaved as a signal peptide.

This sequence belongs to the UDP-glycosyltransferase family.

Catalyzes the transfer of glucose from UDP-glucose to ecdysteroids which are insect molting hormones. Expression of egt interferes with normal insect development and block molting. In Lymantria dispar multicapsid nuclear polyhedrosis virus (LdMNPV), this protein is Ecdysteroid UDP-glucosyltransferase (EGT).